The following is a 304-amino-acid chain: tRNA dimethylallyltransferase (304 aa).

Residue 10–17 (GPTASGKT) coordinates ATP. 12–17 (TASGKT) provides a ligand contact to substrate. 3 interaction with substrate tRNA regions span residues 35-38 (DSAL), 159-163 (QRLSR), and 240-245 (RCVGYR).

The protein belongs to the IPP transferase family. Monomer. The cofactor is Mg(2+).

The enzyme catalyses adenosine(37) in tRNA + dimethylallyl diphosphate = N(6)-dimethylallyladenosine(37) in tRNA + diphosphate. Functionally, catalyzes the transfer of a dimethylallyl group onto the adenine at position 37 in tRNAs that read codons beginning with uridine, leading to the formation of N6-(dimethylallyl)adenosine (i(6)A). This Shewanella sp. (strain W3-18-1) protein is tRNA dimethylallyltransferase.